Here is a 396-residue protein sequence, read N- to C-terminus: Phosphoglycerate kinase (396 aa).

Substrate contacts are provided by residues 22-24 (DLN), Arg37, 60-63 (HFGR), Arg118, and Arg151. ATP contacts are provided by residues Lys201, Glu323, and 353 to 356 (GGDT).

It belongs to the phosphoglycerate kinase family. In terms of assembly, monomer.

Its subcellular location is the cytoplasm. It catalyses the reaction (2R)-3-phosphoglycerate + ATP = (2R)-3-phospho-glyceroyl phosphate + ADP. The protein operates within carbohydrate degradation; glycolysis; pyruvate from D-glyceraldehyde 3-phosphate: step 2/5. The chain is Phosphoglycerate kinase from Xanthobacter autotrophicus (strain ATCC BAA-1158 / Py2).